We begin with the raw amino-acid sequence, 29 residues long: Varv peptide D (29 aa).

The cyclopeptide (Gly-Asn) cross-link spans 1-29; that stretch reads GLPICGETCVGGSCNTPGCSCSWPVCTRN. 3 disulfides stabilise this stretch: Cys5-Cys19, Cys9-Cys21, and Cys14-Cys26.

Post-translationally, this is a cyclic peptide.

Probably participates in a plant defense mechanism. The protein is Varv peptide D of Viola arvensis (European field pansy).